A 39-amino-acid chain; its full sequence is Conotoxin Cl14.5 (39 aa).

A propeptide spanning residues proline 1–glycine 16 is cleaved from the precursor. Residue proline 38 is modified to Proline amide.

In terms of processing, contains 2 disulfide bonds. In terms of tissue distribution, expressed by the venom duct.

It localises to the secreted. This chain is Conotoxin Cl14.5, found in Californiconus californicus (California cone).